Here is a 652-residue protein sequence, read N- to C-terminus: Pesticidal crystal protein Cry3Bb (652 aa).

Positions 1–12 are enriched in basic and acidic residues; that stretch reads MNPNNRSEHDTI. Disordered regions lie at residues 1-33 and 433-465; these read MNPN…ADNP and KNET…ETTD. Over residues 14-33 the composition is skewed to polar residues; it reads VTPNSELQTNHNQYPLADNP.

It belongs to the delta endotoxin family. As to quaternary structure, monomer.

Functionally, promotes colloidosmotic lysis by binding to the midgut epithelial cells of Coleoptera. Has moderate level of toxicity to southern corn rootworm. This is Pesticidal crystal protein Cry3Bb (cry3Bb) from Bacillus thuringiensis.